A 575-amino-acid polypeptide reads, in one-letter code: Cytokinin dehydrogenase 1 (575 aa).

A signal peptide spans 1–31; the sequence is MGLTSSLRFHRQNNKTFLGIFMILVLSCIPG. N-linked (GlcNAc...) asparagine glycans are attached at residues Asn14, Asn38, and Asn115. The region spanning 84–262 is the FAD-binding PCMH-type domain; it reads YQLPPLAILH…TRARISLEPA (179 aa). Ala120, Gly122, and Gly124 together coordinate FAD. His125 is modified (pros-8alpha-FAD histidine). FAD-binding residues include Ser126, Gln130, Asp186, Thr191, Ser197, Ile201, and Ile252. N-linked (GlcNAc...) asparagine glycosylation is found at Asn303, Asn318, Asn437, and Asn467. Positions 498 and 536 each coordinate FAD.

Belongs to the oxygen-dependent FAD-linked oxidoreductase family. FAD is required as a cofactor. Expressed in shoot apexes, lateral shoot meristems, growing tissues of young flowers, and weakly at the root-hypocotyl junction.

Its subcellular location is the vacuole. The enzyme catalyses N(6)-dimethylallyladenine + A + H2O = 3-methyl-2-butenal + adenine + AH2. Catalyzes the oxidation of cytokinins, a family of N(6)-substituted adenine derivatives that are plant hormones, where the substituent is an isopentenyl group. Catalyzes in vitro the oxidation of various types of cytokinin nucleotides that are known as direct products of cytokinin biosynthesis. Promotes adventitious root initiation downstream of MYC2-dependent jasmonate signaling. Cytokinin degraded by CKX1 is required for cell division in the female gametophyte by modulating the expression of cell cycle genes. The protein is Cytokinin dehydrogenase 1 (CKX1) of Arabidopsis thaliana (Mouse-ear cress).